We begin with the raw amino-acid sequence, 157 residues long: MAKKHRQKPDNLLAQNKKAGHDYNILDTYEAGIALTGTEIKSVRDGKLNLRDGFARIRNNEAWLENVHISPYKEGNLFNVDPMRNRKLLLHKREIRKLGQMTARQGVTLVPLRMYLKHGYAKVLIGVAEGKHNYDKRETLKRKDQEREVQRALKARY.

This sequence belongs to the SmpB family.

The protein localises to the cytoplasm. Its function is as follows. Required for rescue of stalled ribosomes mediated by trans-translation. Binds to transfer-messenger RNA (tmRNA), required for stable association of tmRNA with ribosomes. tmRNA and SmpB together mimic tRNA shape, replacing the anticodon stem-loop with SmpB. tmRNA is encoded by the ssrA gene; the 2 termini fold to resemble tRNA(Ala) and it encodes a 'tag peptide', a short internal open reading frame. During trans-translation Ala-aminoacylated tmRNA acts like a tRNA, entering the A-site of stalled ribosomes, displacing the stalled mRNA. The ribosome then switches to translate the ORF on the tmRNA; the nascent peptide is terminated with the 'tag peptide' encoded by the tmRNA and targeted for degradation. The ribosome is freed to recommence translation, which seems to be the essential function of trans-translation. The sequence is that of SsrA-binding protein from Lacticaseibacillus paracasei (strain ATCC 334 / BCRC 17002 / CCUG 31169 / CIP 107868 / KCTC 3260 / NRRL B-441) (Lactobacillus paracasei).